A 268-amino-acid polypeptide reads, in one-letter code: Glutamate racemase (268 aa).

Substrate-binding positions include 14–15 (DS) and 46–47 (YG). The Proton donor/acceptor role is filled by C78. 79–80 (NS) contributes to the substrate binding site. Catalysis depends on C190, which acts as the Proton donor/acceptor. Substrate is bound at residue 191–192 (TH).

Belongs to the aspartate/glutamate racemases family.

The enzyme catalyses L-glutamate = D-glutamate. The protein operates within cell wall biogenesis; peptidoglycan biosynthesis. Its function is as follows. Provides the (R)-glutamate required for cell wall biosynthesis. The protein is Glutamate racemase of Treponema pallidum (strain Nichols).